The primary structure comprises 352 residues: Ribosome biogenesis protein BRX1 homolog (352 aa).

The segment at 1-47 (MAATKRKRRGDLEVQAKKPKKNRKDAGQPAKQADVAKEAEEEKDRIP) is disordered. Over residues 34–46 (DVAKEAEEEKDRI) the composition is skewed to basic and acidic residues. Positions 59–248 (ERILIFSSRG…LIKIFQGSFG (190 aa)) constitute a Brix domain. A Glycyl lysine isopeptide (Lys-Gly) (interchain with G-Cter in SUMO2) cross-link involves residue Lys-159. Ser-260 bears the Phosphoserine mark. The residue at position 275 (Lys-275) is an N6-acetyllysine. Residues 281 to 301 (QVKDVQKSRKKEPKTILPHDP) are disordered. Residues Lys-313 and Lys-321 each participate in a glycyl lysine isopeptide (Lys-Gly) (interchain with G-Cter in SUMO2) cross-link.

It belongs to the BRX1 family.

The protein resides in the nucleus. It localises to the nucleolus. Its function is as follows. Required for biogenesis of the 60S ribosomal subunit. This Rattus norvegicus (Rat) protein is Ribosome biogenesis protein BRX1 homolog (Brix1).